The chain runs to 647 residues: Protein FAM161A (647 aa).

Disordered regions lie at residues 32 to 55 (RELG…TSME) and 143 to 175 (PAQH…GDSE). The segment covering 152–161 (SRSVSPSLAE) has biased composition (polar residues). Coiled-coil stretches lie at residues 243 to 268 (IKSK…ECQK) and 518 to 544 (AIRK…VLNK). Disordered stretches follow at residues 504 to 524 (QTPR…KREK) and 588 to 647 (DEHV…IEEI). Basic and acidic residues-rich tracts occupy residues 510–524 (ESSK…KREK) and 588–600 (DEHV…KKIP). Residues 613-638 (DLLDDEEDDKYDCESEEAEEEDAYST) are compositionally biased toward acidic residues.

It belongs to the FAM161 family.

The protein localises to the cytoplasm. Its subcellular location is the cytoskeleton. The protein resides in the cilium basal body. It is found in the cell projection. It localises to the cilium. The protein localises to the microtubule organizing center. Its subcellular location is the centrosome. The protein resides in the centriole. In terms of biological role, involved in ciliogenesis. This Xenopus laevis (African clawed frog) protein is Protein FAM161A (fam161a).